The following is a 482-amino-acid chain: C3a anaphylatoxin chemotactic receptor (482 aa).

At 1–23 (MASFSAETNSTDLLSQPWNEPPV) the chain is on the extracellular side. N9 carries an N-linked (GlcNAc...) asparagine glycan. The chain crosses the membrane as a helical span at residues 24–46 (ILSMVILSLTFLLGLPGNGLVLW). The Cytoplasmic portion of the chain corresponds to 47–57 (VAGLKMQRTVN). A helical transmembrane segment spans residues 58-80 (TIWFLHLTLADLLCCLSLPFSLA). Topologically, residues 81-96 (HLALQGQWPYGRFLCK) are extracellular. C95 and C172 are disulfide-bonded. A helical membrane pass occupies residues 97–118 (LIPSIIVLNMFASVFLLTAISL). The Cytoplasmic portion of the chain corresponds to 119-139 (DRCLVVFKPIWCQNHRNVGMA). A helical membrane pass occupies residues 140–160 (CSICGCIWVVAFVMCIPVFVY). At 161-340 (REIFTTDNHN…TPLVAITITR (180 aa)) the chain is on the extracellular side. Residues Y174 and Y184 each carry the sulfotyrosine modification. N194 carries N-linked (GlcNAc...) asparagine glycosylation. S266 is a glycosylation site (O-linked (GalNAc...) serine). Y318 is modified (sulfotyrosine). Residues 341-360 (LVVGFLLPSVIMIACYSFIV) traverse the membrane as a helical segment. The Cytoplasmic portion of the chain corresponds to 361–377 (FRMQRGRFAKSQSKTFR). Residues 378 to 400 (VAVVVVAVFLVCWTPYHIFGVLS) traverse the membrane as a helical segment. The Extracellular portion of the chain corresponds to 401-417 (LLTDPETPLGKTLMSWD). Residues 418–438 (HVCIALASANSCFNPFLYALL) traverse the membrane as a helical segment. At 439–482 (GKDFRKKARQSIQGILEAAFSEELTRSTHCPSNNVISERNSTTV) the chain is on the cytoplasmic side. S459 carries the phosphoserine modification. T463 bears the Phosphothreonine mark.

This sequence belongs to the G-protein coupled receptor 1 family. Interacts with VGF-derived peptide TLQP-21. Among the sulfation sites Tyr-174 is essential for binding of C3a anaphylatoxin. In terms of processing, O-glycosylated. In terms of tissue distribution, widely expressed in several differentiated hematopoietic cell lines, in the lung, spleen, ovary, placenta, small intestine, throughout the brain, heart, and endothelial cells. Mostly expressed in lymphoid tissues.

Its subcellular location is the cell membrane. In terms of biological role, receptor for the chemotactic and inflammatory peptide anaphylatoxin C3a. This receptor stimulates chemotaxis, granule enzyme release and superoxide anion production. This is C3a anaphylatoxin chemotactic receptor (C3AR1) from Homo sapiens (Human).